The chain runs to 129 residues: Ribosome-binding factor A (129 aa).

Belongs to the RbfA family. Monomer. Binds 30S ribosomal subunits, but not 50S ribosomal subunits or 70S ribosomes.

The protein localises to the cytoplasm. Functionally, one of several proteins that assist in the late maturation steps of the functional core of the 30S ribosomal subunit. Associates with free 30S ribosomal subunits (but not with 30S subunits that are part of 70S ribosomes or polysomes). Required for efficient processing of 16S rRNA. May interact with the 5'-terminal helix region of 16S rRNA. The protein is Ribosome-binding factor A of Stutzerimonas stutzeri (strain A1501) (Pseudomonas stutzeri).